The sequence spans 816 residues: Probable E3 ubiquitin-protein ligase hulA (816 aa).

The region spanning 1 to 112 (MGSNLPAQPN…QMGGDEMLTR (112 aa)) is the C2 domain. 2 disordered regions span residues 134–238 (NLST…GWER) and 254–354 (RTTT…YFVD). Residues 160–178 (VPQVAPSSSHPAASGAAPV) show a composition bias toward low complexity. Residues 181-192 (SASNPSLNPQRV) show a composition bias toward polar residues. The segment covering 193 to 213 (PSTTRPSSTAAPASAAGAAAS) has biased composition (low complexity). 2 stretches are compositionally biased toward polar residues: residues 214-227 (NTHGSRTNLSSFED) and 254-267 (RTTTWTRPSSNYNE). A WW 1 domain is found at 230-263 (GRLPAGWERREDNLGRTYYVDHNTRTTTWTRPSS). Residues 268-295 (HAQRSQREANMQLERRAHQSRMLPEDRT) are compositionally biased toward basic and acidic residues. The segment covering 296 to 310 (GANSPNLPESSQQAH) has biased composition (polar residues). Low complexity predominate over residues 325-334 (ATGATTAGTG). 2 consecutive WW domains span residues 334-367 (GELPPGWEQRTTPEGRPYFVDHNTRTTTWVDPRR) and 394-427 (GPLPSGWEMRLTNTARVYFVDHNTKTTTWDDPRL). In terms of domain architecture, HECT spans 483–816 (SASDLKKRLM…VEETLGFGQE (334 aa)). C784 (glycyl thioester intermediate) is an active-site residue.

The protein belongs to the RSP5/NEDD4 family. In terms of assembly, interacts with creD.

The protein localises to the cytoplasm. The enzyme catalyses S-ubiquitinyl-[E2 ubiquitin-conjugating enzyme]-L-cysteine + [acceptor protein]-L-lysine = [E2 ubiquitin-conjugating enzyme]-L-cysteine + N(6)-ubiquitinyl-[acceptor protein]-L-lysine.. The protein operates within protein modification; protein ubiquitination. Its function is as follows. E3 ubiquitin-protein ligase which accepts ubiquitin from an E2 ubiquitin-conjugating enzyme in the form of a thioester and then directly transfers the ubiquitin to targeted substrates. Probably involved in the regulatory network controlling carbon source utilization. The sequence is that of Probable E3 ubiquitin-protein ligase hulA (hulA) from Neosartorya fischeri (strain ATCC 1020 / DSM 3700 / CBS 544.65 / FGSC A1164 / JCM 1740 / NRRL 181 / WB 181) (Aspergillus fischerianus).